We begin with the raw amino-acid sequence, 1256 residues long: Putative protein DDB_G0292252 (1256 aa).

4 disordered regions span residues 1-53 (MSDD…NNNN), 145-243 (LLNG…SISR), 898-951 (EQQQ…PVET), and 1069-1136 (SHPT…ATIS). Over residues 147-214 (NGNNSNNNSN…NGNNINTSNG (68 aa)) the composition is skewed to low complexity. Positions 222 to 243 (QTESTEQDFTSTSQNSTPSISR) are enriched in polar residues. Composition is skewed to low complexity over residues 898–916 (EQQQ…SNNE) and 925–942 (TTAA…TTTT). The span at 1069–1079 (SHPTIQSTSSP) shows a compositional bias: polar residues. A compositionally biased stretch (low complexity) spans 1080-1136 (STSSSNNNNSTTTATNNNGNNGNNNNGNGNNNNNNNNNNNNNNNNNNNNNNGPATIS).

This chain is Putative protein DDB_G0292252, found in Dictyostelium discoideum (Social amoeba).